Here is a 166-residue protein sequence, read N- to C-terminus: Lipoprotein signal peptidase (166 aa).

Helical transmembrane passes span 12–32 (WLWL…LILQ), 70–90 (WFFA…MYRS), and 102–122 (ALII…GFVV). Residues Asp-123 and Asp-141 contribute to the active site. The helical transmembrane segment at 137–157 (FNLADTAICIGAALIVLEGFL) threads the bilayer.

Belongs to the peptidase A8 family.

It is found in the cell inner membrane. The catalysed reaction is Release of signal peptides from bacterial membrane prolipoproteins. Hydrolyzes -Xaa-Yaa-Zaa-|-(S,diacylglyceryl)Cys-, in which Xaa is hydrophobic (preferably Leu), and Yaa (Ala or Ser) and Zaa (Gly or Ala) have small, neutral side chains.. It participates in protein modification; lipoprotein biosynthesis (signal peptide cleavage). Its function is as follows. This protein specifically catalyzes the removal of signal peptides from prolipoproteins. This Salmonella typhi protein is Lipoprotein signal peptidase.